Reading from the N-terminus, the 215-residue chain is MLEKIFPKIHSEGYKFLAIAIIVTIFLYVLSTFLGLIGLVLSIWVYYFFRDPERISINDENYLTSPADGEVLMVHEVDGPKELGLEDRKFTKISIFMNVFDCHVNRTPCEGKISEILYKPGKFLNASLDKASEDNERNYYKITNTHGEEIIVVQIAGLIARRIVCESSKDQQLQQGERIGMIRFGSRADVYFENYESLVKVGQKTIAGETLLAKK.

Ser-186 acts as the Schiff-base intermediate with substrate; via pyruvic acid in catalysis. Pyruvic acid (Ser); by autocatalysis is present on Ser-186.

The protein belongs to the phosphatidylserine decarboxylase family. PSD-A subfamily. Heterodimer of a large membrane-associated beta subunit and a small pyruvoyl-containing alpha subunit. Requires pyruvate as cofactor. Is synthesized initially as an inactive proenzyme. Formation of the active enzyme involves a self-maturation process in which the active site pyruvoyl group is generated from an internal serine residue via an autocatalytic post-translational modification. Two non-identical subunits are generated from the proenzyme in this reaction, and the pyruvate is formed at the N-terminus of the alpha chain, which is derived from the carboxyl end of the proenzyme. The post-translation cleavage follows an unusual pathway, termed non-hydrolytic serinolysis, in which the side chain hydroxyl group of the serine supplies its oxygen atom to form the C-terminus of the beta chain, while the remainder of the serine residue undergoes an oxidative deamination to produce ammonia and the pyruvoyl prosthetic group on the alpha chain.

The protein resides in the cell membrane. It carries out the reaction a 1,2-diacyl-sn-glycero-3-phospho-L-serine + H(+) = a 1,2-diacyl-sn-glycero-3-phosphoethanolamine + CO2. The protein operates within phospholipid metabolism; phosphatidylethanolamine biosynthesis; phosphatidylethanolamine from CDP-diacylglycerol: step 2/2. Catalyzes the formation of phosphatidylethanolamine (PtdEtn) from phosphatidylserine (PtdSer). The protein is Phosphatidylserine decarboxylase proenzyme of Pelagibacter ubique (strain HTCC1062).